A 401-amino-acid polypeptide reads, in one-letter code: S-adenosylmethionine synthase (401 aa).

Residue 136–141 (GQGSVD) coordinates ATP.

Belongs to the AdoMet synthase 2 family. Requires Mg(2+) as cofactor.

The catalysed reaction is L-methionine + ATP + H2O = S-adenosyl-L-methionine + phosphate + diphosphate. It participates in amino-acid biosynthesis; S-adenosyl-L-methionine biosynthesis; S-adenosyl-L-methionine from L-methionine: step 1/1. Catalyzes the formation of S-adenosylmethionine from methionine and ATP. This Pyrococcus abyssi (strain GE5 / Orsay) protein is S-adenosylmethionine synthase (mat).